Consider the following 186-residue polypeptide: Histone deacetylase complex subunit SAP25 (186 aa).

2 disordered regions span residues 1 to 25 and 148 to 186; these read MSPLPLRDPSHQANAGPRLVEPSCG and EQTPNCVASSLPSTSCPDPVSVSEDPGPSGDQSCSGTDT. Polar residues-rich tracts occupy residues 148-163 and 177-186; these read EQTPNCVASSLPSTSC and GDQSCSGTDT.

As to quaternary structure, may be a component of the mSIN3A corepressor complex. Interacts with SIN3A and HDAC2. Widely expressed.

It is found in the nucleus. It localises to the cytoplasm. Functionally, involved in the transcriptional repression mediated by the mSIN3A but not the N-CoR corepressor complex. The protein is Histone deacetylase complex subunit SAP25 (Sap25) of Mus musculus (Mouse).